The chain runs to 75 residues: MRTTIDLPQDLHKQALAIARDTHRTLSETVADLMRRGLAANRPTALSSDPRTGLPLVSVGTVVTSEDVRSLEDEQ.

Its function is as follows. Possibly the antitoxic component of a type II toxin-antitoxin (TA) system. Its cognate toxin is VapC29 (Potential). The polypeptide is Putative antitoxin VapB29 (vapB29) (Mycobacterium tuberculosis (strain CDC 1551 / Oshkosh)).